Reading from the N-terminus, the 310-residue chain is Malate dehydrogenase (310 aa).

NAD(+)-binding positions include 7–12 (GAGHVG) and D32. R81 and R87 together coordinate substrate. NAD(+) is bound by residues N94 and 117–119 (VSN). N119 and R150 together coordinate substrate. The active-site Proton acceptor is the H174.

It belongs to the LDH/MDH superfamily. MDH type 3 family.

The enzyme catalyses (S)-malate + NAD(+) = oxaloacetate + NADH + H(+). Its function is as follows. Catalyzes the reversible oxidation of malate to oxaloacetate. This is Malate dehydrogenase from Chlorobium phaeobacteroides (strain BS1).